Here is a 240-residue protein sequence, read N- to C-terminus: MSQKPTSHPYKPNMTQDELKALVGQAALPYVEPGSIVGVGTGSTVNKFIDALATMKDRIAGAVSSSVASTERLQAIGIKVFDATEVDELAVYIDGADEIDHAGYMIKGGGAALTREKIVAAQSRKFVCIADESKLVQTLGSFPLPVEVIPMAARRIARQFAALGGTATLRSKGGAESGEPLVTDNGQHILDVTGLKITDPLGFESQVNQWPGVVTVGVFAFQKAHVCLLGASDGVRTLVF.

Residues T41 to T44, D94 to D97, and K107 to G110 contribute to the substrate site. The Proton acceptor role is filled by E116. K134 provides a ligand contact to substrate.

This sequence belongs to the ribose 5-phosphate isomerase family. As to quaternary structure, homodimer.

It catalyses the reaction aldehydo-D-ribose 5-phosphate = D-ribulose 5-phosphate. The protein operates within carbohydrate degradation; pentose phosphate pathway; D-ribose 5-phosphate from D-ribulose 5-phosphate (non-oxidative stage): step 1/1. Functionally, catalyzes the reversible conversion of ribose-5-phosphate to ribulose 5-phosphate. This is Ribose-5-phosphate isomerase A from Polaromonas sp. (strain JS666 / ATCC BAA-500).